The sequence spans 395 residues: S-adenosylmethionine synthase (395 aa).

Histidine 16 contributes to the ATP binding site. Aspartate 18 contributes to the Mg(2+) binding site. K(+) is bound at residue glutamate 44. Residues glutamate 57 and glutamine 100 each contribute to the L-methionine site. Residues 100–110 (QSTDIAQGVNE) form a flexible loop region. ATP is bound by residues 174–176 (DAK), 241–242 (RF), aspartate 250, 256–257 (RK), alanine 273, and lysine 277. L-methionine is bound at residue aspartate 250. An L-methionine-binding site is contributed by lysine 281.

It belongs to the AdoMet synthase family. Homotetramer; dimer of dimers. The cofactor is Mg(2+). K(+) serves as cofactor.

Its subcellular location is the cytoplasm. The catalysed reaction is L-methionine + ATP + H2O = S-adenosyl-L-methionine + phosphate + diphosphate. Its pathway is amino-acid biosynthesis; S-adenosyl-L-methionine biosynthesis; S-adenosyl-L-methionine from L-methionine: step 1/1. Functionally, catalyzes the formation of S-adenosylmethionine (AdoMet) from methionine and ATP. The overall synthetic reaction is composed of two sequential steps, AdoMet formation and the subsequent tripolyphosphate hydrolysis which occurs prior to release of AdoMet from the enzyme. This is S-adenosylmethionine synthase from Streptococcus uberis (strain ATCC BAA-854 / 0140J).